The following is a 150-amino-acid chain: MKVIFLEDVRGKGKKGQVKDVPDGYAQNFLIKNGKAKPATTAAVSALKGQQHAEAKNAAAELAEAKVLKTKIEDDKTIVEVKSKAGEDSRLFGSIPSKQIAQALEQQYKIKVDKRKIDLPEPIKALGYRNVDVRIHPDVTATIRVHIVAE.

Belongs to the bacterial ribosomal protein bL9 family.

Binds to the 23S rRNA. The protein is Large ribosomal subunit protein bL9 of Latilactobacillus sakei subsp. sakei (strain 23K) (Lactobacillus sakei subsp. sakei).